Reading from the N-terminus, the 601-residue chain is DNA ligase (601 aa).

Aspartate 258 provides a ligand contact to ATP. The active-site N6-AMP-lysine intermediate is lysine 260. Residues arginine 265, arginine 280, glutamate 310, phenylalanine 350, arginine 427, and lysine 433 each contribute to the ATP site. A disordered region spans residues 568–601; it reads DKSPEDATTTDEILEMYNKQPKKKIESPPIDESV.

The protein belongs to the ATP-dependent DNA ligase family. It depends on Mg(2+) as a cofactor.

It catalyses the reaction ATP + (deoxyribonucleotide)n-3'-hydroxyl + 5'-phospho-(deoxyribonucleotide)m = (deoxyribonucleotide)n+m + AMP + diphosphate.. Its function is as follows. DNA ligase that seals nicks in double-stranded DNA during DNA replication, DNA recombination and DNA repair. In Saccharolobus islandicus (strain Y.N.15.51 / Yellowstone #2) (Sulfolobus islandicus), this protein is DNA ligase.